A 172-amino-acid polypeptide reads, in one-letter code: 3-hydroxydecanoyl-[acyl-carrier-protein] dehydratase (172 aa).

H71 is a catalytic residue.

The protein belongs to the thioester dehydratase family. FabA subfamily. Homodimer.

The protein resides in the cytoplasm. It carries out the reaction a (3R)-hydroxyacyl-[ACP] = a (2E)-enoyl-[ACP] + H2O. The catalysed reaction is (3R)-hydroxydecanoyl-[ACP] = (2E)-decenoyl-[ACP] + H2O. The enzyme catalyses (2E)-decenoyl-[ACP] = (3Z)-decenoyl-[ACP]. It participates in lipid metabolism; fatty acid biosynthesis. Functionally, necessary for the introduction of cis unsaturation into fatty acids. Catalyzes the dehydration of (3R)-3-hydroxydecanoyl-ACP to E-(2)-decenoyl-ACP and then its isomerization to Z-(3)-decenoyl-ACP. Can catalyze the dehydratase reaction for beta-hydroxyacyl-ACPs with saturated chain lengths up to 16:0, being most active on intermediate chain length. The chain is 3-hydroxydecanoyl-[acyl-carrier-protein] dehydratase from Brucella abortus (strain S19).